Consider the following 240-residue polypeptide: MIIFPAIDILDGKCVRLFKGDFNKTTVYENDPVKTAKDFESQGSKYLHIVDLDGAKNPLNRQSEIIKRIALETELNIQTGGGIRSEEQIKDYLDNGVSSVIVGSMAAVEPEKAKGWIKTFGKERIVLSLDVNIVNNEPFVAAYGWQGSSGKNLFDLINGYTLQGLRVLCTDISRDGALQGPNIDLYKNVLNKCPGVELQASGGVAGLNDLIKLKETGVHGVIVGKALYERKFTLREALSI.

Asp-8 serves as the catalytic Proton acceptor. Asp-130 serves as the catalytic Proton donor.

Belongs to the HisA/HisF family.

It localises to the cytoplasm. The enzyme catalyses 1-(5-phospho-beta-D-ribosyl)-5-[(5-phospho-beta-D-ribosylamino)methylideneamino]imidazole-4-carboxamide = 5-[(5-phospho-1-deoxy-D-ribulos-1-ylimino)methylamino]-1-(5-phospho-beta-D-ribosyl)imidazole-4-carboxamide. The protein operates within amino-acid biosynthesis; L-histidine biosynthesis; L-histidine from 5-phospho-alpha-D-ribose 1-diphosphate: step 4/9. This Elusimicrobium minutum (strain Pei191) protein is 1-(5-phosphoribosyl)-5-[(5-phosphoribosylamino)methylideneamino] imidazole-4-carboxamide isomerase.